The following is a 492-amino-acid chain: Probable glycine dehydrogenase (decarboxylating) subunit 2 (492 aa).

The residue at position 274 (K274) is an N6-(pyridoxal phosphate)lysine.

The protein belongs to the GcvP family. C-terminal subunit subfamily. As to quaternary structure, the glycine cleavage system is composed of four proteins: P, T, L and H. In this organism, the P 'protein' is a heterodimer of two subunits. Requires pyridoxal 5'-phosphate as cofactor.

It catalyses the reaction N(6)-[(R)-lipoyl]-L-lysyl-[glycine-cleavage complex H protein] + glycine + H(+) = N(6)-[(R)-S(8)-aminomethyldihydrolipoyl]-L-lysyl-[glycine-cleavage complex H protein] + CO2. Its function is as follows. The glycine cleavage system catalyzes the degradation of glycine. The P protein binds the alpha-amino group of glycine through its pyridoxal phosphate cofactor; CO(2) is released and the remaining methylamine moiety is then transferred to the lipoamide cofactor of the H protein. The sequence is that of Probable glycine dehydrogenase (decarboxylating) subunit 2 from Exiguobacterium sibiricum (strain DSM 17290 / CCUG 55495 / CIP 109462 / JCM 13490 / 255-15).